The chain runs to 187 residues: Elongation factor P (187 aa).

It belongs to the elongation factor P family.

The protein resides in the cytoplasm. It participates in protein biosynthesis; polypeptide chain elongation. Involved in peptide bond synthesis. Stimulates efficient translation and peptide-bond synthesis on native or reconstituted 70S ribosomes in vitro. Probably functions indirectly by altering the affinity of the ribosome for aminoacyl-tRNA, thus increasing their reactivity as acceptors for peptidyl transferase. The polypeptide is Elongation factor P (Parvibaculum lavamentivorans (strain DS-1 / DSM 13023 / NCIMB 13966)).